Reading from the N-terminus, the 101-residue chain is Small ribosomal subunit protein uS14 (101 aa).

The segment at 32–67 is disordered; sequence SDAKRSDEEREAARLGLQKLPRNANPTRQRNRCEIT. The segment covering 33–44 has biased composition (basic and acidic residues); it reads DAKRSDEEREAA.

The protein belongs to the universal ribosomal protein uS14 family. As to quaternary structure, part of the 30S ribosomal subunit. Contacts proteins S3 and S10.

Its function is as follows. Binds 16S rRNA, required for the assembly of 30S particles and may also be responsible for determining the conformation of the 16S rRNA at the A site. The sequence is that of Small ribosomal subunit protein uS14 from Paracidovorax citrulli (strain AAC00-1) (Acidovorax citrulli).